A 259-amino-acid chain; its full sequence is Probable ABC transporter permease protein RT0041 (259 aa).

A run of 5 helical transmembrane segments spans residues 20–40 (VGIF…PPLY), 49–69 (LFIG…SGAV), 148–168 (VIAA…IGVM), 195–215 (LIDV…ISII), and 237–257 (AVVN…ELLF).

Belongs to the MlaE permease family.

It localises to the cell inner membrane. Functionally, could be part of an ABC transporter complex. The sequence is that of Probable ABC transporter permease protein RT0041 from Rickettsia typhi (strain ATCC VR-144 / Wilmington).